The primary structure comprises 330 residues: Aspartate--ammonia ligase (330 aa).

Belongs to the class-II aminoacyl-tRNA synthetase family. AsnA subfamily.

Its subcellular location is the cytoplasm. The enzyme catalyses L-aspartate + NH4(+) + ATP = L-asparagine + AMP + diphosphate + H(+). Its pathway is amino-acid biosynthesis; L-asparagine biosynthesis; L-asparagine from L-aspartate (ammonia route): step 1/1. The sequence is that of Aspartate--ammonia ligase from Salmonella schwarzengrund (strain CVM19633).